The following is a 697-amino-acid chain: Colicin-D (697 aa).

The TonB box signature appears at 17-24 (HSMVVWPS).

This sequence belongs to the cloacin colicin family.

Its function is as follows. Colicins are polypeptide toxins produced by and active against E.coli and closely related bacteria. Colicin D inhibits protein synthesis. The protein is Colicin-D (cda) of Escherichia coli.